A 315-amino-acid polypeptide reads, in one-letter code: DNA-directed RNA polymerase subunit alpha (315 aa).

An alpha N-terminal domain (alpha-NTD) region spans residues methionine 1 to threonine 228. The interval lysine 245–glutamate 315 is alpha C-terminal domain (alpha-CTD).

This sequence belongs to the RNA polymerase alpha chain family. As to quaternary structure, homodimer. The RNAP catalytic core consists of 2 alpha, 1 beta, 1 beta' and 1 omega subunit. When a sigma factor is associated with the core the holoenzyme is formed, which can initiate transcription.

The enzyme catalyses RNA(n) + a ribonucleoside 5'-triphosphate = RNA(n+1) + diphosphate. Its function is as follows. DNA-dependent RNA polymerase catalyzes the transcription of DNA into RNA using the four ribonucleoside triphosphates as substrates. The polypeptide is DNA-directed RNA polymerase subunit alpha (Clostridium botulinum (strain Alaska E43 / Type E3)).